Reading from the N-terminus, the 552-residue chain is MFS-type transporter atr4 (552 aa).

Residues 1–102 form a disordered region; the sequence is MEDPKSLSAP…NIVDWDGPND (102 aa). The span at 16 to 27 shows a compositional bias: low complexity; it reads ADTTTADETPAA. Polar residues-rich tracts occupy residues 38-47 and 71-80; these read KAGSESSENT and LRNSSVSRSN. Residue Asn-73 is glycosylated (N-linked (GlcNAc...) asparagine). 6 helical membrane-spanning segments follow: residues 118–138, 153–173, 182–202, 214–234, 244–264, and 272–292; these read IFLV…LATG, LGSL…LVIA, MPLY…CALG, LQGC…SDLI, GIYA…GGFL, and WLMW…FVVM. A glycan (N-linked (GlcNAc...) asparagine) is linked at Asn-314. 6 helical membrane-spanning segments follow: residues 346–366, 385–405, 425–445, 452–472, 498–518, and 521–541; these read PIIF…YLLF, GLVY…FGVF, LLPM…YGWS, WIVP…TLVC, VVGA…GIGW, and SLLA…YVYG.

It belongs to the major facilitator superfamily.

It localises to the cell membrane. MFS-type transporter; part of the gene cluster that mediates the biosynthesis of atranorin, a depside of polyketide origin that accumulates in the cortical or medullary layers of lichen thalli. In Stereocaulon alpinum (Alpine snow lichen), this protein is MFS-type transporter atr4.